Reading from the N-terminus, the 121-residue chain is Small ribosomal subunit protein uS13 (121 aa).

Residues 92–121 (KRGLPVRGQRTRTNARTRKGPRRAAASLKK) form a disordered region.

It belongs to the universal ribosomal protein uS13 family. As to quaternary structure, part of the 30S ribosomal subunit. Forms a loose heterodimer with protein S19. Forms two bridges to the 50S subunit in the 70S ribosome.

Its function is as follows. Located at the top of the head of the 30S subunit, it contacts several helices of the 16S rRNA. In the 70S ribosome it contacts the 23S rRNA (bridge B1a) and protein L5 of the 50S subunit (bridge B1b), connecting the 2 subunits; these bridges are implicated in subunit movement. Contacts the tRNAs in the A and P-sites. This is Small ribosomal subunit protein uS13 from Bordetella bronchiseptica (strain ATCC BAA-588 / NCTC 13252 / RB50) (Alcaligenes bronchisepticus).